Here is a 445-residue protein sequence, read N- to C-terminus: MNLASQSGEAGAGQLLFANFNQDNTSLAVGSKSGYKFFSLSSVDKLEQIYECTDTEDVCIVERLFSSSLVAIVSLKAPRKLKVCHFKKGTEICNYSYSNTILAVKLNRQRLIVCLEESLYIHNIRDMKVLHTIRETPPNPAGLCALSINNDNCYLAYPGSASIGEVQVFDTINLRAANMIPAHDSPLAALAFDASGTKLATASEKGTVIRVFSIPEGQKLFEFRRGVKRCVSICSLAFSMDGMFLSASSNTETVHIFKLEAVREKPPEEPTTWTGYFGKVLMASTSYLPSQVTEMFNQGRAFATVRLPFCGHKNICSLTTIQKIPRLLVGASDGYLYMYNLDPQEGGECALMRQHRLDGSMETTSEIVDSASHDCPLATQTYGTAAAKGAYVPSSPTRLGKGQDANLEAYTDDLGAVGGACLEDEASALRLDEDSEHPPMILRTD.

Residues 182–222 (AHDSPLAALAFDASGTKLATASEKGTVIRVFSIPEGQKLFE) form a WD 1 repeat. Positions 223 to 226 (FRRG) match the L/FRRG motif motif. 2 WD repeats span residues 228–267 (KRCVSICSLAFSMDGMFLSASSNTETVHIFKLEAVREKPP) and 311–349 (GHKNICSLTTIQKIPRLLVGASDGYLYMYNLDPQEGGEC). The residue at position 395 (S395) is a Phosphoserine.

The protein belongs to the WD repeat PROPPIN family. As to quaternary structure, interacts with TECPR1. Interacts with ATG16L1. Interacts with ATG5. Interacts with WIPI1. Interacts with WDR45. May interact with NUDC. Interacts with ULK1 and RB1CC1.

The protein resides in the preautophagosomal structure membrane. In terms of biological role, component of the autophagy machinery that controls the major intracellular degradation process by which cytoplasmic materials are packaged into autophagosomes and delivered to lysosomes for degradation. Involved in an early step of the formation of preautophagosomal structures. Binds and is activated by phosphatidylinositol 3-phosphate (PtdIns3P) forming on membranes of the endoplasmic reticulum upon activation of the upstream ULK1 and PI3 kinases. Mediates ER-isolation membranes contacts by interacting with the ULK1:RB1CC1 complex and PtdIns3P. Once activated, WIPI2 recruits at phagophore assembly sites the ATG12-ATG5-ATG16L1 complex that directly controls the elongation of the nascent autophagosomal membrane. In Mus musculus (Mouse), this protein is WD repeat domain phosphoinositide-interacting protein 2.